The primary structure comprises 252 residues: Imidazole glycerol phosphate synthase subunit HisF (252 aa).

Residues D11 and D130 contribute to the active site.

Belongs to the HisA/HisF family. Heterodimer of HisH and HisF.

The protein resides in the cytoplasm. The enzyme catalyses 5-[(5-phospho-1-deoxy-D-ribulos-1-ylimino)methylamino]-1-(5-phospho-beta-D-ribosyl)imidazole-4-carboxamide + L-glutamine = D-erythro-1-(imidazol-4-yl)glycerol 3-phosphate + 5-amino-1-(5-phospho-beta-D-ribosyl)imidazole-4-carboxamide + L-glutamate + H(+). Its pathway is amino-acid biosynthesis; L-histidine biosynthesis; L-histidine from 5-phospho-alpha-D-ribose 1-diphosphate: step 5/9. In terms of biological role, IGPS catalyzes the conversion of PRFAR and glutamine to IGP, AICAR and glutamate. The HisF subunit catalyzes the cyclization activity that produces IGP and AICAR from PRFAR using the ammonia provided by the HisH subunit. The sequence is that of Imidazole glycerol phosphate synthase subunit HisF from Bacillus cereus (strain AH187).